The primary structure comprises 538 residues: Importin subunit alpha-6 (538 aa).

The IBB domain maps to 1-58 (MSYKPSAKTEVRRNRYKVSVDADEGRRRREDNMVEIRKNKREENLQKKRREGFNPSMA). Residues 1–69 (MSYKPSAKTE…QPGQDFSSSL (69 aa)) form a disordered region. A compositionally biased stretch (basic and acidic residues) spans 7–46 (AKTEVRRNRYKVSVDADEGRRRREDNMVEIRKNKREENLQ). Residues 56 to 69 (SMASQPGQDFSSSL) show a composition bias toward polar residues. 8 ARM repeats span residues 109–149 (NPPI…NIAS), 152–191 (SENTRVIIDSGAVPLFVKLLSSASEEVREQAVWALGNVAG), 194–234 (PKCR…NFCR), 236–275 (KPQPAFEQTKAALPALERLLHSTDEEVLTDASWALSYLSD), 278–317 (NEKIQTVIDAGVIPRLVQLLAHPSPSVLIPALRTIGNIVT), 320–360 (DIQT…NITA), 363–402 (TSQIQEVFQAGIIRPLINLLEIGEFEIKKEAVWAISNATS), and 406–445 (HDQIKFLVSQGCIRPLCDLLPCPDPRVVTVTLEGLENILK).

This sequence belongs to the importin alpha family. Forms a complex with importin subunit beta-1.

The protein localises to the nucleus envelope. In terms of biological role, binds to conventional NLS motifs and mediates nuclear protein import across the nuclear envelope. Acts as a cellular receptor for the nuclear import of the virD2 protein of Agrobacterium, but is not essential for Agrobacterium-mediated root transformation. This chain is Importin subunit alpha-6, found in Arabidopsis thaliana (Mouse-ear cress).